A 122-amino-acid chain; its full sequence is Large ribosomal subunit protein uL14 (122 aa).

Belongs to the universal ribosomal protein uL14 family. In terms of assembly, part of the 50S ribosomal subunit. Forms a cluster with proteins L3 and L19. In the 70S ribosome, L14 and L19 interact and together make contacts with the 16S rRNA in bridges B5 and B8.

Binds to 23S rRNA. Forms part of two intersubunit bridges in the 70S ribosome. This chain is Large ribosomal subunit protein uL14, found in Ligilactobacillus salivarius (strain UCC118) (Lactobacillus salivarius).